Here is a 379-residue protein sequence, read N- to C-terminus: Proton extrusion protein PxcA (379 aa).

A run of 4 helical transmembrane segments spans residues 153 to 173 (TLVS…LQQI), 254 to 274 (AIKN…VCLF), 300 to 320 (FVII…GWTV), and 337 to 357 (FIDL…KYWI).

This sequence belongs to the CemA family.

It localises to the cell inner membrane. Its function is as follows. Required for H(+) efflux immediately after light irradiation to form a rapid H(+) concentration gradient across the thylakoid membranes. Together with PxcL, contributes to transient H(+) uptake following dark to light transition. The polypeptide is Proton extrusion protein PxcA (Synechococcus sp. (strain RCC307)).